We begin with the raw amino-acid sequence, 618 residues long: MSIEILPARLANQIAAGEVVERPASVVKELVENSLDAGATRIQIDIERGGHKLIRIRDNGAGIAQDELTLALSRHATSKLKSLDDLENICSLGFRGEALASISSVSRLTLSSKTKHQEAAWQAFAQGRDMAVQVKPVAHPDGTTIEVKDLFFNTPARRKFLRTEKTEFSHIDELIKRIALSRFDVSITLTHNEKVVRQYRAKTDPSQAIARVAQVAGKAFAEQGLHIQSGEGGLQLHGWVLPVGSANTVQYTYVNNRMMRDKLILHAIRQAFEEVSGAQELPGFVIYIDIDPRQVDVNVHPAKHEVRFHQGRLVHDFILQAIKQVVVPLQGEFTNEPLNNLADTAFSQTDTARSPTGNFESGEVFDYPKSQLQPSHSVSSGGASLGSRSAGGSGGAYRATPSTNHHDINAFYQGVSEQHAAHFDQGAHVSVGVNQSHAVEQAVALKTVAIISINEGVCVFSSEQQLYCSHFKYALVDDWHEQIKEQGSLEGKALLLPVRVNLSKQDCELIAAQQSWFTLLGFELIIEKQFVMVKKLPACLYLLDVTSAVESLLEACKAPLENIESWLAWQMQHTPARFYSSNIFLAQQARMQNNPQTIERLRVKAVKIDIEHYLMQLD.

Positions 348-359 (QTDTARSPTGNF) are enriched in polar residues. A disordered region spans residues 348–400 (QTDTARSPTGNFESGEVFDYPKSQLQPSHSVSSGGASLGSRSAGGSGGAYRAT). The segment covering 377 to 388 (SVSSGGASLGSR) has biased composition (low complexity).

Belongs to the DNA mismatch repair MutL/HexB family.

Functionally, this protein is involved in the repair of mismatches in DNA. It is required for dam-dependent methyl-directed DNA mismatch repair. May act as a 'molecular matchmaker', a protein that promotes the formation of a stable complex between two or more DNA-binding proteins in an ATP-dependent manner without itself being part of a final effector complex. The protein is DNA mismatch repair protein MutL of Pseudoalteromonas translucida (strain TAC 125).